A 642-amino-acid chain; its full sequence is Chaperone protein HtpG (642 aa).

Residues 1–348 (MSTKIEQLEF…AQDLSLNVSR (348 aa)) are a; substrate-binding. The tract at residues 349–564 (EILQQDRQIR…AFSMSPALER (216 aa)) is b. The segment at 565-642 (MYRASGQPVP…MLANRLARTV (78 aa)) is c.

This sequence belongs to the heat shock protein 90 family. In terms of assembly, homodimer.

The protein resides in the cytoplasm. Molecular chaperone. Has ATPase activity. In Rhodococcus jostii (strain RHA1), this protein is Chaperone protein HtpG.